The chain runs to 147 residues: Transthyretin (147 aa).

Residues 1–20 (MASRRLLLLCLAGLVLVTEA) form the signal peptide. Cys30 is subject to Sulfocysteine. Lys35 contributes to the L-thyroxine binding site. Glu62 carries the post-translational modification 4-carboxyglutamate. Residue Glu74 coordinates L-thyroxine. The N-linked (GlcNAc...) asparagine glycan is linked to Asn118. Ser137 lines the L-thyroxine pocket.

The protein belongs to the transthyretin family. Homotetramer. Dimer of dimers. In the homotetramer, subunits assemble around a central channel that can accommodate two ligand molecules. Interacts with RBP4. In terms of processing, sulfonation of the reactive cysteine Cys-30 enhances the stability of the native conformation of TTR, avoiding misassembly of the protein leading to amyloid formation. In terms of tissue distribution, detected in serum (at protein level). Detected in liver.

Its subcellular location is the secreted. Functionally, thyroid hormone-binding protein. Probably transports thyroxine from the bloodstream to the brain. The sequence is that of Transthyretin (TTR) from Sorex araneus (Eurasian common shrew).